Consider the following 572-residue polypeptide: Secreted triacylglycerol lipase LIP6 (572 aa).

Positions 1-23 (MYSTSLLRWLVVALVSAVPLVTA) are cleaved as a signal peptide. A disulfide bridge connects residues C117 and C291. S202 acts as the Nucleophile in catalysis. Residue D351 is part of the active site. N-linked (GlcNAc...) asparagine glycosylation occurs at N360. Residue H385 is part of the active site. Residues 468-572 (KGGVWNDVLK…SSRRHVARFM (105 aa)) are disordered. The span at 491–511 (PESKKATKKYKSESKAEKKQP) shows a compositional bias: basic and acidic residues. Positions 512–525 (DSIPSSSSKSSSDN) are enriched in low complexity. N-linked (GlcNAc...) asparagine glycosylation is present at N525. Basic residues predominate over residues 528–540 (AHAKYHAHGHGHG). The segment covering 541 to 562 (HASSNSNNGHSHSAKESSTSKG) has biased composition (low complexity). The segment covering 563-572 (SSRRHVARFM) has biased composition (basic residues).

This sequence belongs to the AB hydrolase superfamily. Lipase family. Class Lip subfamily.

The protein localises to the secreted. Its subcellular location is the cell wall. It catalyses the reaction a triacylglycerol + H2O = a diacylglycerol + a fatty acid + H(+). It carries out the reaction a monoacylglycerol + H2O = glycerol + a fatty acid + H(+). The catalysed reaction is a diacylglycerol + H2O = a monoacylglycerol + a fatty acid + H(+). Secreted lipase involved in Dandruff and seborrheic dermatitis (D/SD) probably via lipase-mediated breakdown of sebaceous lipids and release of irritating free fatty acids. Shows only minimal activity against triolein. Mostly converts monoolein to di- and triolein, while free fatty acids are only produced in low amounts. This Malassezia globosa (strain ATCC MYA-4612 / CBS 7966) (Dandruff-associated fungus) protein is Secreted triacylglycerol lipase LIP6.